A 75-amino-acid chain; its full sequence is Small ribosomal subunit protein bS18 (75 aa).

A2 is modified (N-acetylalanine).

This sequence belongs to the bacterial ribosomal protein bS18 family. As to quaternary structure, part of the 30S ribosomal subunit. Forms a tight heterodimer with protein bS6.

Its function is as follows. Binds as a heterodimer with protein bS6 to the central domain of the 16S rRNA, where it helps stabilize the platform of the 30S subunit. This Salmonella typhimurium (strain LT2 / SGSC1412 / ATCC 700720) protein is Small ribosomal subunit protein bS18 (rpsR).